Consider the following 1225-residue polypeptide: ABC transporter B family member 18 (1225 aa).

Helical transmembrane passes span 23–43, 70–90, 146–168, 172–194, 252–272, and 284–304; these read MALG…IFFI, VALV…GYCW, LPNF…LLLW, IVGF…ALIR, GIAI…TWYG, and GTVS…GQSL. The ABC transmembrane type-1 1 domain maps to 23–312; sequence MALGLIGAVG…SLSNLKYFSE (290 aa). The region spanning 347–583 is the ABC transporter 1 domain; it reads VEFNHVKFTY…LDGQYTSLVR (237 aa). 382–389 is a binding site for ATP; the sequence is GGSGSGKS. Asn-530 carries N-linked (GlcNAc...) asparagine glycosylation. A run of 2 helical transmembrane segments spans residues 657-677 and 699-719; these read ALYG…YSYS and IYVL…ISQH. One can recognise an ABC transmembrane type-1 2 domain in the interval 657-945; that stretch reads ALYGCLGAAL…AGTMTKDLVK (289 aa). Asn-754 carries an N-linked (GlcNAc...) asparagine glycan. Helical transmembrane passes span 780–800, 804–824, 880–900, and 919–939; these read LLVQ…VISW, IVMM…RVLL, SWLA…VSAL, and FLEI…AGTM. Asn-960 and Asn-1000 each carry an N-linked (GlcNAc...) asparagine glycan. Positions 980–1218 constitute an ABC transporter 2 domain; it reads ISFSNVDFAY…GPKGAYFSLV (239 aa). Residue 1015-1022 participates in ATP binding; that stretch reads GPSGSGKS. Residue Asn-1201 is glycosylated (N-linked (GlcNAc...) asparagine).

It belongs to the ABC transporter superfamily. ABCB family. Multidrug resistance exporter (TC 3.A.1.201) subfamily.

Its subcellular location is the membrane. The protein is ABC transporter B family member 18 (ABCB18) of Arabidopsis thaliana (Mouse-ear cress).